We begin with the raw amino-acid sequence, 490 residues long: Glutamate--tRNA ligase (490 aa).

A 'HIGH' region motif is present at residues 10–20 (PSPTGRMHVGN). Zn(2+) is bound by residues C109, C111, C140, and H142. Residues 257–261 (KLSKR) carry the 'KMSKS' region motif. An ATP-binding site is contributed by K260.

The protein belongs to the class-I aminoacyl-tRNA synthetase family. Glutamate--tRNA ligase type 1 subfamily. Monomer. Zn(2+) is required as a cofactor.

It is found in the cytoplasm. It carries out the reaction tRNA(Glu) + L-glutamate + ATP = L-glutamyl-tRNA(Glu) + AMP + diphosphate. Its function is as follows. Catalyzes the attachment of glutamate to tRNA(Glu) in a two-step reaction: glutamate is first activated by ATP to form Glu-AMP and then transferred to the acceptor end of tRNA(Glu). This is Glutamate--tRNA ligase from Lachnoclostridium phytofermentans (strain ATCC 700394 / DSM 18823 / ISDg) (Clostridium phytofermentans).